A 501-amino-acid chain; its full sequence is Vitamin D 25-hydroxylase (501 aa).

An N-terminal signal peptide occupies residues 1-26; it reads MWKLWRAEEGAAALGGALFLLLFALG. Alanine 250 is a substrate binding site. Cysteine 448 contacts heme.

Belongs to the cytochrome P450 family. In terms of assembly, homodimer. Heme serves as cofactor.

The protein resides in the endoplasmic reticulum membrane. The protein localises to the microsome membrane. It catalyses the reaction calciol + reduced [NADPH--hemoprotein reductase] + O2 = calcidiol + oxidized [NADPH--hemoprotein reductase] + H2O + H(+). It carries out the reaction vitamin D2 + reduced [NADPH--hemoprotein reductase] + O2 = 25-hydroxyvitamin D2 + oxidized [NADPH--hemoprotein reductase] + H2O + H(+). The catalysed reaction is 1alpha-hydroxyvitamin D2 + reduced [NADPH--hemoprotein reductase] + O2 = 1alpha,25-dihydroxyvitamin D2 + oxidized [NADPH--hemoprotein reductase] + H2O + H(+). The enzyme catalyses alfacalcidol + reduced [NADPH--hemoprotein reductase] + O2 = calcitriol + oxidized [NADPH--hemoprotein reductase] + H2O + H(+). It functions in the pathway hormone biosynthesis; vitamin D biosynthesis. Its function is as follows. A cytochrome P450 monooxygenase involved in activation of vitamin D precursors. Catalyzes hydroxylation at C-25 of both forms of vitamin D, vitamin D(2) and D(3) (calciol). Can metabolize vitamin D analogs/prodrugs 1alpha-hydroxyvitamin D(2) (doxercalciferol) and 1alpha-hydroxyvitamin D(3) (alfacalcidol) forming 25-hydroxy derivatives. Mechanistically, uses molecular oxygen inserting one oxygen atom into a substrate, and reducing the second into a water molecule, with two electrons provided by NADPH via cytochrome P450 reductase (CPR; NADPH-ferrihemoprotein reductase). The chain is Vitamin D 25-hydroxylase (CYP2R1) from Homo sapiens (Human).